We begin with the raw amino-acid sequence, 470 residues long: Uronate isomerase (470 aa).

It belongs to the metallo-dependent hydrolases superfamily. Uronate isomerase family.

The catalysed reaction is D-glucuronate = D-fructuronate. The enzyme catalyses aldehydo-D-galacturonate = keto-D-tagaturonate. It participates in carbohydrate metabolism; pentose and glucuronate interconversion. The chain is Uronate isomerase from Shigella boydii serotype 4 (strain Sb227).